Consider the following 500-residue polypeptide: Melanopsin-like (500 aa).

Topologically, residues M1 to Y65 are extracellular. The N-linked (GlcNAc...) asparagine glycan is linked to N18. A helical membrane pass occupies residues I66–V86. Over Y87 to M101 the chain is Cytoplasmic. The chain crosses the membrane as a helical span at residues F102–F122. Residues A123 to E138 are Extracellular-facing. Residues C137 and C215 are joined by a disulfide bond. Residues L139–A159 form a helical membrane-spanning segment. At A160–G182 the chain is on the cytoplasmic side. Residues A183–W203 form a helical membrane-spanning segment. The Extracellular portion of the chain corresponds to S204–L232. The chain crosses the membrane as a helical span at residues L233–F253. Over Q254–K286 the chain is Cytoplasmic. Residues V287–L307 traverse the membrane as a helical segment. Residues T308–N322 lie on the Extracellular side of the membrane. Residues S323–T343 traverse the membrane as a helical segment. Position 330 is an N6-(retinylidene)lysine (K330). The Cytoplasmic segment spans residues H344–N500. A disordered region spans residues R404–S428. Polar residues predominate over residues R409–S428.

It belongs to the G-protein coupled receptor 1 family. Opsin subfamily. Expressed in a subset of retinal horizontal cells.

The protein resides in the cell membrane. In terms of biological role, photoreceptor implicated in non-image-forming responses to light. In Danio rerio (Zebrafish), this protein is Melanopsin-like (opn4l).